Reading from the N-terminus, the 363-residue chain is NAD(P)H-quinone oxidoreductase subunit 1, chloroplastic (363 aa).

6 helical membrane passes run 30–50 (FLPI…IVWL), 104–124 (IAVI…HLVL), 129–149 (IGVF…LMSG), 248–268 (YSGI…LVSS), 300–320 (VFGT…FLFI), and 343–363 (FLLP…LLSL).

The protein belongs to the complex I subunit 1 family. NDH is composed of at least 16 different subunits, 5 of which are encoded in the nucleus.

The protein localises to the plastid. It localises to the chloroplast thylakoid membrane. The enzyme catalyses a plastoquinone + NADH + (n+1) H(+)(in) = a plastoquinol + NAD(+) + n H(+)(out). It carries out the reaction a plastoquinone + NADPH + (n+1) H(+)(in) = a plastoquinol + NADP(+) + n H(+)(out). NDH shuttles electrons from NAD(P)H:plastoquinone, via FMN and iron-sulfur (Fe-S) centers, to quinones in the photosynthetic chain and possibly in a chloroplast respiratory chain. The immediate electron acceptor for the enzyme in this species is believed to be plastoquinone. Couples the redox reaction to proton translocation, and thus conserves the redox energy in a proton gradient. In Eucalyptus globulus subsp. globulus (Tasmanian blue gum), this protein is NAD(P)H-quinone oxidoreductase subunit 1, chloroplastic.